The primary structure comprises 504 residues: Multicopper oxidase MmcO (504 aa).

The segment at residues 1-44 is a signal peptide (tat-type signal); that stretch reads MPELATSGNAFDKRRFSRRGFLGAGIASGFALAACASKPTASGA. Residues His120, His122, His161, and His163 each contribute to the Cu cation site. The region spanning 190–349 is the Plastocyanin-like domain; sequence EWIIILDDWT…NALARALLST (160 aa). Cu cation is bound by residues His437, His440, His442, His485, Cys486, His487, and His491.

It belongs to the multicopper oxidase family. It depends on Cu cation as a cofactor. In terms of processing, predicted to be exported by the Tat system. The position of the signal peptide cleavage has not been experimentally proven.

Its subcellular location is the cell inner membrane. The protein resides in the periplasm. It catalyses the reaction 4 Fe(2+) + O2 + 4 H(+) = 4 Fe(3+) + 2 H2O. Functionally, required for copper resistance. In vitro, oxidizes organic substrates and Fe(2+). May act in vivo by oxidation of toxic periplasmic Cu(+). This Mycobacterium tuberculosis (strain ATCC 25618 / H37Rv) protein is Multicopper oxidase MmcO.